A 379-amino-acid chain; its full sequence is Cytochrome b (379 aa).

A run of 4 helical transmembrane segments spans residues 34–54 (FGSL…LLAM), 78–99 (WLIR…YLHI), 114–134 (WNTG…GYVL), and 179–199 (FFAL…IHLT). Heme b-binding residues include histidine 84 and histidine 98. The heme b site is built by histidine 183 and histidine 197. Histidine 202 is an a ubiquinone binding site. Helical transmembrane passes span 227–247 (LKDI…AFFS), 289–309 (LGGV…PFLH), 321–341 (LSQM…WIGS), and 348–368 (FIII…ILFP).

The protein belongs to the cytochrome b family. As to quaternary structure, the cytochrome bc1 complex contains 11 subunits: 3 respiratory subunits (MT-CYB, CYC1 and UQCRFS1), 2 core proteins (UQCRC1 and UQCRC2) and 6 low-molecular weight proteins (UQCRH/QCR6, UQCRB/QCR7, UQCRQ/QCR8, UQCR10/QCR9, UQCR11/QCR10 and a cleavage product of UQCRFS1). This cytochrome bc1 complex then forms a dimer. It depends on heme b as a cofactor.

It is found in the mitochondrion inner membrane. Functionally, component of the ubiquinol-cytochrome c reductase complex (complex III or cytochrome b-c1 complex) that is part of the mitochondrial respiratory chain. The b-c1 complex mediates electron transfer from ubiquinol to cytochrome c. Contributes to the generation of a proton gradient across the mitochondrial membrane that is then used for ATP synthesis. This chain is Cytochrome b (MT-CYB), found in Dromaius novaehollandiae (Emu).